The primary structure comprises 185 residues: Photosystem I assembly protein Ycf4 (185 aa).

2 helical membrane-spanning segments follow: residues 24–44 (YIIGGMLTIGGIGFLLASISS) and 58–78 (ALLFIPQGIIMGAYGVIANLL).

This sequence belongs to the Ycf4 family.

It is found in the cellular thylakoid membrane. Its function is as follows. Seems to be required for the assembly of the photosystem I complex. The protein is Photosystem I assembly protein Ycf4 of Prochlorococcus marinus (strain MIT 9215).